Reading from the N-terminus, the 1323-residue chain is Glutamate receptor ionotropic, NMDA 2D (1323 aa).

A signal peptide spans 1-27 (MRGAGGPRGPRGPAKMLLLLALACASP). At 28–579 (FPEEVPGPGA…SPSAFLEPYS (552 aa)) the chain is on the extracellular side. Asparagine 89 carries N-linked (GlcNAc...) asparagine glycosylation. Cysteines 101 and 345 form a disulfide. 4 N-linked (GlcNAc...) asparagine glycosylation sites follow: asparagine 349, asparagine 363, asparagine 381, and asparagine 464. Disulfide bonds link cysteine 452/cysteine 480 and cysteine 459/cysteine 481. L-glutamate is bound by residues serine 536, threonine 538, and arginine 543. N-linked (GlcNAc...) asparagine glycosylation is present at asparagine 566. A helical membrane pass occupies residues 580-601 (PAVWVMMFVMCLTVVAVTVFIF). Residues 602–626 (EYLSPVGYNRSLATGKRPGGSTFTI) are Cytoplasmic-facing. Residues 627–638 (GKSIWLLWALVF) constitute an intramembrane region (discontinuously helical). A pore-forming region spans residues 628–647 (KSIWLLWALVFNNSVPVENP). Residues 639–650 (NNSVPVENPRGT) lie on the Cytoplasmic side of the membrane. Residues 651–671 (TSKIMVLVWAFFAVIFLASYT) traverse the membrane as a helical segment. The Extracellular portion of the chain corresponds to 672–840 (ANLAAFMIQE…EVMSSKLDID (169 aa)). A glycan (N-linked (GlcNAc...) asparagine) is linked at asparagine 712. Positions 714, 715, and 756 each coordinate L-glutamate. Cysteine 770 and cysteine 825 are joined by a disulfide. Residues 841 to 864 (NMAGVFYMLLVAMGLSLLVFAWEH) form a helical membrane-spanning segment. The Cytoplasmic segment spans residues 865 to 1323 (LVYWRLRHCL…AHFSSLESEV (459 aa)). 3 disordered regions span residues 897–952 (EAAP…PGGA), 977–1112 (AAPR…SLGG), and 1201–1323 (PWAA…ESEV). A compositionally biased stretch (pro residues) spans 899–929 (APPPAKPPPPPQPLPSPAYPAARPPPGPAPF). Residues 931–940 (PRERAAADRW) are compositionally biased toward basic and acidic residues. Positions 977–986 (AAPRGAAGRP) are enriched in low complexity. Residues 987 to 1001 (LSPPTTQPPQKPPPS) show a composition bias toward pro residues. A compositionally biased stretch (low complexity) spans 1030–1039 (AAAAAAVGPP). A compositionally biased stretch (pro residues) spans 1080–1092 (TAPPPRRAAPPPC). Positions 1208–1228 (PRRRARCGCPRPHPHRPRASH) are enriched in basic residues. Position 1303 is an omega-N-methylarginine (arginine 1303). At serine 1313 the chain carries Phosphoserine. Positions 1321-1323 (SEV) match the PDZ-binding motif.

The protein belongs to the glutamate-gated ion channel (TC 1.A.10.1) family. NR2D/GRIN2D subfamily. As to quaternary structure, heterotetramer. Forms heterotetrameric channels composed of two GluN1/zeta subunits (GRIN1), and two identical GluN2/epsilon subunits (GRIN2A, GRIN2B, GRIN2C or GRIN2D) or GluN3 subunits (GRIN3A or GRIN3B) (in vitro). In vivo, the subunit composition may depend on the expression levels of the different subunits. Interacts with PDZ domains of PATJ and DLG4. In terms of tissue distribution, expressed in brain, mainly in the subcortical region.

The protein localises to the cell membrane. It is found in the postsynaptic cell membrane. The catalysed reaction is Ca(2+)(in) = Ca(2+)(out). It carries out the reaction Na(+)(in) = Na(+)(out). The enzyme catalyses K(+)(in) = K(+)(out). Its function is as follows. Component of N-methyl-D-aspartate (NMDA) receptors (NMDARs) that function as heterotetrameric, ligand-gated cation channels with high calcium permeability and voltage-dependent block by Mg(2+). Participates in synaptic plasticity for learning and memory formation. Channel activation requires binding of the neurotransmitter L-glutamate to the GluN2 subunit, glycine or D-serine binding to the GluN1 subunit, plus membrane depolarization to eliminate channel inhibition by Mg(2+). NMDARs mediate simultaneously the potasium efflux and the influx of calcium and sodium. Each GluN2 subunit confers differential attributes to channel properties, including activation, deactivation and desensitization kinetics, pH sensitivity, Ca2(+) permeability, and binding to allosteric modulators. The chain is Glutamate receptor ionotropic, NMDA 2D from Rattus norvegicus (Rat).